A 263-amino-acid chain; its full sequence is Exosome complex component Rrp4 (263 aa).

The 77-residue stretch at 51-127 folds into the S1 motif domain; sequence GKYIPSRKDF…KAMKVELSMR (77 aa). The KH domain occupies 135 to 196; that stretch reads SKGRIIEVVP…DRLTTAIEMI (62 aa). A disordered region spans residues 213 to 263; sequence LRGEPEGTEGSDEEQLVDEEVAGVSLEDDDVTEETSRKVDVLLDNDTDETN. Residues 218–245 are compositionally biased toward acidic residues; sequence EGTEGSDEEQLVDEEVAGVSLEDDDVTE.

The protein belongs to the RRP4 family. Component of the archaeal exosome complex. Forms a trimer of Rrp4 and/or Csl4 subunits. The trimer associates with a hexameric ring-like arrangement composed of 3 Rrp41-Rrp42 heterodimers.

The protein localises to the cytoplasm. Its function is as follows. Non-catalytic component of the exosome, which is a complex involved in RNA degradation. Increases the RNA binding and the efficiency of RNA degradation. Confers strong poly(A) specificity to the exosome. This is Exosome complex component Rrp4 from Methanococcoides burtonii (strain DSM 6242 / NBRC 107633 / OCM 468 / ACE-M).